A 94-amino-acid polypeptide reads, in one-letter code: DNA-directed RNA polymerase subunit Rpo11 (94 aa).

It belongs to the archaeal Rpo11/eukaryotic RPB11/RPC19 RNA polymerase subunit family. In terms of assembly, part of the RNA polymerase complex.

It is found in the cytoplasm. It catalyses the reaction RNA(n) + a ribonucleoside 5'-triphosphate = RNA(n+1) + diphosphate. Functionally, DNA-dependent RNA polymerase (RNAP) catalyzes the transcription of DNA into RNA using the four ribonucleoside triphosphates as substrates. This chain is DNA-directed RNA polymerase subunit Rpo11, found in Halobacterium salinarum (strain ATCC 700922 / JCM 11081 / NRC-1) (Halobacterium halobium).